A 253-amino-acid polypeptide reads, in one-letter code: Ribosomal RNA small subunit methyltransferase J (253 aa).

S-adenosyl-L-methionine-binding positions include 101 to 102 (RD), 117 to 118 (ER), and D169.

Belongs to the methyltransferase superfamily. RsmJ family.

The protein localises to the cytoplasm. The catalysed reaction is guanosine(1516) in 16S rRNA + S-adenosyl-L-methionine = N(2)-methylguanosine(1516) in 16S rRNA + S-adenosyl-L-homocysteine + H(+). Its function is as follows. Specifically methylates the guanosine in position 1516 of 16S rRNA. The protein is Ribosomal RNA small subunit methyltransferase J of Psychromonas ingrahamii (strain DSM 17664 / CCUG 51855 / 37).